Consider the following 372-residue polypeptide: GTPase Obg (372 aa).

One can recognise an Obg domain in the interval 1–159 (MKFIDEARIE…RMLKLELKVL (159 aa)). Positions 128-147 (LHFKSSTNRAPRQKTDGKPG) are disordered. Positions 160–334 (ADVGLLGMPN…LVYAIYDYLA (175 aa)) constitute an OBG-type G domain. GTP-binding positions include 166 to 173 (GMPNAGKS), 191 to 195 (FTTLA), 213 to 216 (DIPG), 284 to 287 (NKLD), and 315 to 317 (SAL). Mg(2+)-binding residues include Ser173 and Thr193.

This sequence belongs to the TRAFAC class OBG-HflX-like GTPase superfamily. OBG GTPase family. In terms of assembly, monomer. Mg(2+) serves as cofactor.

The protein resides in the cytoplasm. Its function is as follows. An essential GTPase which binds GTP, GDP and possibly (p)ppGpp with moderate affinity, with high nucleotide exchange rates and a fairly low GTP hydrolysis rate. Plays a role in control of the cell cycle, stress response, ribosome biogenesis and in those bacteria that undergo differentiation, in morphogenesis control. This Burkholderia thailandensis (strain ATCC 700388 / DSM 13276 / CCUG 48851 / CIP 106301 / E264) protein is GTPase Obg.